Consider the following 188-residue polypeptide: Elongation factor P (188 aa).

N6-(3,6-diaminohexanoyl)-5-hydroxylysine is present on Lys34.

This sequence belongs to the elongation factor P family. In terms of processing, may be beta-lysylated on the epsilon-amino group of Lys-34 by the combined action of EpmA and EpmB, and then hydroxylated on the C5 position of the same residue by EpmC (if this protein is present). Lysylation is critical for the stimulatory effect of EF-P on peptide-bond formation. The lysylation moiety may extend toward the peptidyltransferase center and stabilize the terminal 3-CCA end of the tRNA. Hydroxylation of the C5 position on Lys-34 may allow additional potential stabilizing hydrogen-bond interactions with the P-tRNA.

The protein resides in the cytoplasm. The protein operates within protein biosynthesis; polypeptide chain elongation. Its function is as follows. Involved in peptide bond synthesis. Alleviates ribosome stalling that occurs when 3 or more consecutive Pro residues or the sequence PPG is present in a protein, possibly by augmenting the peptidyl transferase activity of the ribosome. Modification of Lys-34 is required for alleviation. The chain is Elongation factor P from Pectobacterium atrosepticum (strain SCRI 1043 / ATCC BAA-672) (Erwinia carotovora subsp. atroseptica).